The primary structure comprises 310 residues: MDSFKTVLKFFTDQKTTIGYSVMAILTIGSERIFSMVSFQCPCTKGQNFPYGICFLLGPAVVLLVVGFFVSTRFWRLYTGCCLNPLKLCPRGNFVGCLKGLIKVLYGACVAPVMWLTVALLNGTFYECAVSGLDEVAVIQIFCADKGSVCQDELHRVPCGKSTLPPEQNTELLYMLRAQSQILGWSVIITAVVIALIGTCYKNCVSQVSYLQLTFWKIYMEKEREKFDAFANDYATKLADRNLKSFFDNKLPEEFPFPNHKAWEEISAIYNFRKSEQHYSTLQRYVERSDRDYSPDEHPMVEMDHGIEMV.

Helical transmembrane passes span 17-37 (TIGY…FSMV), 49-69 (FPYG…VGFF), 101-121 (LIKV…VALL), and 181-201 (QILG…GTCY).

It belongs to the CALHM family.

The protein localises to the membrane. Pore-forming subunit of a voltage-gated ion channel. This Danio rerio (Zebrafish) protein is Calcium homeostasis modulator protein 5 (calhm5.1).